The primary structure comprises 699 residues: Elongation factor G (699 aa).

One can recognise a tr-type G domain in the interval 8–288 (EDYRNFGIMA…AVVDYLPSPL (281 aa)). Residues 17–24 (AHIDAGKT), 86–90 (DTPGH), and 140–143 (NKMD) each bind GTP.

Belongs to the TRAFAC class translation factor GTPase superfamily. Classic translation factor GTPase family. EF-G/EF-2 subfamily.

The protein resides in the cytoplasm. Functionally, catalyzes the GTP-dependent ribosomal translocation step during translation elongation. During this step, the ribosome changes from the pre-translocational (PRE) to the post-translocational (POST) state as the newly formed A-site-bound peptidyl-tRNA and P-site-bound deacylated tRNA move to the P and E sites, respectively. Catalyzes the coordinated movement of the two tRNA molecules, the mRNA and conformational changes in the ribosome. The polypeptide is Elongation factor G (Rhizobium rhizogenes (strain K84 / ATCC BAA-868) (Agrobacterium radiobacter)).